Consider the following 185-residue polypeptide: Elongation factor P (185 aa).

It belongs to the elongation factor P family.

It is found in the cytoplasm. Its pathway is protein biosynthesis; polypeptide chain elongation. Involved in peptide bond synthesis. Stimulates efficient translation and peptide-bond synthesis on native or reconstituted 70S ribosomes in vitro. Probably functions indirectly by altering the affinity of the ribosome for aminoacyl-tRNA, thus increasing their reactivity as acceptors for peptidyl transferase. In Nostoc punctiforme (strain ATCC 29133 / PCC 73102), this protein is Elongation factor P.